The sequence spans 307 residues: D-alanine--D-alanine ligase (307 aa).

The 201-residue stretch at 101-301 (KDVLRAAGVP…FGELVRWMVE (201 aa)) folds into the ATP-grasp domain. 128–182 (MTPPYVVKPLGEGSSFGVIIVRADQTHPPQELTRDDWAYGDLVLVERFVAGRELT) serves as a coordination point for ATP. Mg(2+) contacts are provided by Asp-251, Glu-268, and Asn-270.

This sequence belongs to the D-alanine--D-alanine ligase family. Mg(2+) serves as cofactor. Requires Mn(2+) as cofactor.

It localises to the cytoplasm. The enzyme catalyses 2 D-alanine + ATP = D-alanyl-D-alanine + ADP + phosphate + H(+). Its pathway is cell wall biogenesis; peptidoglycan biosynthesis. Functionally, cell wall formation. The chain is D-alanine--D-alanine ligase from Methylocella silvestris (strain DSM 15510 / CIP 108128 / LMG 27833 / NCIMB 13906 / BL2).